The following is a 141-amino-acid chain: Small ribosomal subunit protein bS6 (141 aa).

The tract at residues 96–141 (VTGQSEMLKAEENRSERRERRERPEHADSAEGDDSNDSDSSDNADE) is disordered. Basic and acidic residues predominate over residues 103 to 124 (LKAEENRSERRERRERPEHADS). A compositionally biased stretch (acidic residues) spans 125-141 (AEGDDSNDSDSSDNADE).

Belongs to the bacterial ribosomal protein bS6 family.

Functionally, binds together with bS18 to 16S ribosomal RNA. The chain is Small ribosomal subunit protein bS6 from Pseudomonas putida (strain ATCC 700007 / DSM 6899 / JCM 31910 / BCRC 17059 / LMG 24140 / F1).